We begin with the raw amino-acid sequence, 157 residues long: Transcription elongation factor GreA (157 aa).

The stretch at serine 47 to glutamate 75 forms a coiled coil.

This sequence belongs to the GreA/GreB family.

Functionally, necessary for efficient RNA polymerase transcription elongation past template-encoded arresting sites. The arresting sites in DNA have the property of trapping a certain fraction of elongating RNA polymerases that pass through, resulting in locked ternary complexes. Cleavage of the nascent transcript by cleavage factors such as GreA or GreB allows the resumption of elongation from the new 3'terminus. GreA releases sequences of 2 to 3 nucleotides. This chain is Transcription elongation factor GreA, found in Chloroflexus aurantiacus (strain ATCC 29366 / DSM 635 / J-10-fl).